Reading from the N-terminus, the 660-residue chain is Probable beta-hexosaminidase fdl (660 aa).

An N-terminal signal peptide occupies residues 1 to 36 (MSLAVSLRRALLVLLTGAIFILTVLYWNQGVTKAQA). N-linked (GlcNAc...) asparagine glycosylation is found at N210, N412, and N452.

This sequence belongs to the glycosyl hydrolase 20 family. As to expression, in third instar larval and early pupal brains, expressed in cells sending projections across the interhemispheric junction. In adult brain, expressed in mushroom body, ellipsoid body and pars intercerebralis.

The catalysed reaction is Hydrolysis of terminal non-reducing N-acetyl-D-hexosamine residues in N-acetyl-beta-D-hexosaminides.. In terms of biological role, involved in brain restructurization via hormonal control during metamorphosis. Implicated in N-glycan processing. The protein is Probable beta-hexosaminidase fdl (fdl) of Drosophila melanogaster (Fruit fly).